A 351-amino-acid polypeptide reads, in one-letter code: Translation initiation factor eIF2B subunit beta (351 aa).

The protein belongs to the eIF-2B alpha/beta/delta subunits family. In terms of assembly, component of the translation initiation factor 2B (eIF2B) complex which is a heterodecamer of two sets of five different subunits: alpha, beta, gamma, delta and epsilon. Subunits alpha, beta and delta comprise a regulatory subcomplex and subunits epsilon and gamma comprise a catalytic subcomplex. Within the complex, the hexameric regulatory complex resides at the center, with the two heterodimeric catalytic subcomplexes bound on opposite sides.

It localises to the cytoplasm. The protein resides in the cytosol. Activated by the chemical integrated stress response (ISR) inhibitor ISRIB which stimulates guanine nucleotide exchange factor activity for both phosphorylated and unphosphorylated eIF2. In terms of biological role, acts as a component of the translation initiation factor 2B (eIF2B) complex, which catalyzes the exchange of GDP for GTP on eukaryotic initiation factor 2 (eIF2) gamma subunit. Its guanine nucleotide exchange factor activity is repressed when bound to eIF2 complex phosphorylated on the alpha subunit, thereby limiting the amount of methionyl-initiator methionine tRNA available to the ribosome and consequently global translation is repressed. The chain is Translation initiation factor eIF2B subunit beta (Eif2b2) from Rattus norvegicus (Rat).